Here is a 266-residue protein sequence, read N- to C-terminus: Pyrrolizixenacetamide deacetylase (266 aa).

T28 serves as a coordination point for acetate. The active-site Nucleophile is S94. L95 contacts acetate. Active-site charge relay system residues include D215 and H242. Residue H242 coordinates acetate.

Belongs to the AB hydrolase superfamily. In terms of assembly, homodimer.

The enzyme catalyses pyrrolizixenacetamide + H2O = 3-amino-5,6,7,7a-tetrahydro-1H-pyrrolizin-1-one + acetate + H(+). Involved in the biosynthetic pathway of pyrrolizwilline, a pyrrolizidine alkaloid. Catalyzes the N-deacetylation of pyrrolizixenacetamide. The polypeptide is Pyrrolizixenacetamide deacetylase (Xenorhabdus hominickii).